The following is a 311-amino-acid chain: Olfactory receptor 10D1B (311 aa).

The Extracellular portion of the chain corresponds to 1–24 (MKNLSVVTQFILLGIPHTEGVETM). A helical membrane pass occupies residues 25-45 (LFVLFFSFYIFTLVGNLLILL). The Cytoplasmic segment spans residues 46–54 (AIVSSSRLH). Residues 55 to 75 (TPMYFFLCQLSVCDIFFPSVS) form a helical membrane-spanning segment. The Extracellular segment spans residues 76-95 (SPKMLFYLSGNTPAISYAGC). An intrachain disulfide couples C95 to C187. A helical membrane pass occupies residues 96 to 116 (VSQLFFYHFLGGTECFLYTVM). The Cytoplasmic portion of the chain corresponds to 117–137 (AYDRFVAICYPLRYSVIMSHR). Residues 138-158 (ICAFLAMGTAVFGCIHSTFLT) traverse the membrane as a helical segment. Over 159–192 (TLTFQLPYCGPKDVNYYFCDIPVVMKLACADTST) the chain is Extracellular. Residues 193-213 (LEMVGFISVGLMPLSCFFFIL) traverse the membrane as a helical segment. At 214–237 (TSYSCIVRSILQIRSTEGRHRAFS) the chain is on the cytoplasmic side. Residues 238 to 258 (TCSAHFTAILLFYMPVIFIYL) form a helical membrane-spanning segment. The Extracellular segment spans residues 259-271 (RPTPSPWLDATVQ). The chain crosses the membrane as a helical span at residues 272–288 (ILNNLVTPMLNPLIYSL). Residues 289 to 311 (RNKEVKSSLWTVLHLLCFLPKHL) are Cytoplasmic-facing.

Belongs to the G-protein coupled receptor 1 family.

The protein localises to the cell membrane. Its function is as follows. Odorant receptor. This Mus musculus (Mouse) protein is Olfactory receptor 10D1B.